The chain runs to 203 residues: Large ribosomal subunit protein eL15 (203 aa).

Residues 166-203 (ATGKKSRGINKGHRYNNTRSGRRHTWKRQNTQSYWRYR) are disordered. The span at 169-192 (KKSRGINKGHRYNNTRSGRRHTWK) shows a compositional bias: basic residues. Polar residues predominate over residues 193-203 (RQNTQSYWRYR).

This sequence belongs to the eukaryotic ribosomal protein eL15 family.

The protein is Large ribosomal subunit protein eL15 (rpl15) of Aspergillus niger.